The sequence spans 404 residues: Cysteine desulfurase IscS (404 aa).

Pyridoxal 5'-phosphate is bound by residues 75–76 (AT), Asn155, Gln183, and 203–205 (SGH). Residue Lys206 is modified to N6-(pyridoxal phosphate)lysine. Thr243 contacts pyridoxal 5'-phosphate. Cys328 serves as the catalytic Cysteine persulfide intermediate. Position 328 (Cys328) interacts with [2Fe-2S] cluster.

The protein belongs to the class-V pyridoxal-phosphate-dependent aminotransferase family. NifS/IscS subfamily. Homodimer. Forms a heterotetramer with IscU, interacts with other sulfur acceptors. It depends on pyridoxal 5'-phosphate as a cofactor.

The protein resides in the cytoplasm. The catalysed reaction is (sulfur carrier)-H + L-cysteine = (sulfur carrier)-SH + L-alanine. It participates in cofactor biosynthesis; iron-sulfur cluster biosynthesis. Functionally, master enzyme that delivers sulfur to a number of partners involved in Fe-S cluster assembly, tRNA modification or cofactor biosynthesis. Catalyzes the removal of elemental sulfur atoms from cysteine to produce alanine. Functions as a sulfur delivery protein for Fe-S cluster synthesis onto IscU, an Fe-S scaffold assembly protein, as well as other S acceptor proteins. This chain is Cysteine desulfurase IscS, found in Shewanella frigidimarina (strain NCIMB 400).